We begin with the raw amino-acid sequence, 325 residues long: Protease HtpX homolog 2 (325 aa).

The next 2 membrane-spanning stretches (helical) occupy residues 17–37 and 42–62; these read IAIL…FFGF and LLIT…WLFG. His-146 serves as a coordination point for Zn(2+). The active site involves Glu-147. His-150 is a binding site for Zn(2+). 2 helical membrane passes run 158 to 178 and 195 to 215; these read LLLA…GLWW and ILFL…LFVL. Glu-222 is a binding site for Zn(2+).

The protein belongs to the peptidase M48B family. Zn(2+) serves as cofactor.

Its subcellular location is the cell membrane. The protein is Protease HtpX homolog 2 of Sulfurisphaera tokodaii (strain DSM 16993 / JCM 10545 / NBRC 100140 / 7) (Sulfolobus tokodaii).